The primary structure comprises 493 residues: GPI alpha-1,6-mannosyltransferase 2 (493 aa).

At 1–13 (MWPQDPSRKEVLR) the chain is on the cytoplasmic side. Residues 14–34 (FAVSCRILTLMLQALFNAIIP) traverse the membrane as a helical segment. Residues 35 to 77 (DHHAEAFSPPRLAPSGFVDQLVEGLLGGLSHWDAEHFLFIAEH) are Lumenal-facing. A helical transmembrane segment spans residues 78–98 (GYLYEHNFAFFPGFPLALLVG). The Cytoplasmic segment spans residues 99–113 (TELLRPLRGLLSLRS). Residues 114–134 (CLLISVASLNFLFFMLAAVAL) traverse the membrane as a helical segment. Over 135–136 (HD) the chain is Lumenal. Residues 137-157 (LGCLVLHCPHQSFYAALLFCL) form a helical membrane-spanning segment. Topologically, residues 158–161 (SPAN) are cytoplasmic. A helical membrane pass occupies residues 162–182 (VFLAAGYSEALFALLTFSAMG). Residues 183 to 192 (QLERGRVWTS) lie on the Lumenal side of the membrane. A helical membrane pass occupies residues 193–213 (VLLFAFATGVRSNGLVSVGFL). Over 214-234 (MHSQCQGFFSSLTMLNPLRQL) the chain is Cytoplasmic. Residues 235 to 255 (FKLMASLFLSVFTLGLPFALF) form a helical membrane-spanning segment. Residues 256-327 (QYYAYTQFCL…KYYELKQVPN (72 aa)) are Lumenal-facing. The chain crosses the membrane as a helical span at residues 328–348 (FLLAAPVAILVAWATWTYVTT). The Cytoplasmic portion of the chain corresponds to 349 to 378 (HPWLCLTLGLQRSKNNKTLEKPDLGFLSPQ). The chain crosses the membrane as a helical span at residues 379-399 (VFVYVVHAAVLLLFGGLCMHV). At 400–469 (QVLTRFLGSS…HWKTCSPVTR (70 aa)) the chain is on the lumenal side. Residues 470 to 490 (YILGYFLTYWLLGLLLHCNFL) traverse the membrane as a helical segment. Residues 491–493 (PWT) are Cytoplasmic-facing.

Belongs to the PIGV family. Post-translationally, not N-glycosylated.

It is found in the endoplasmic reticulum membrane. It functions in the pathway glycolipid biosynthesis; glycosylphosphatidylinositol-anchor biosynthesis. Functionally, alpha-1,6-mannosyltransferase that catalyzes the transfer of the second mannose, via an alpha-1,6 bond, from a dolichol-phosphate-mannose (Dol-P-Man) to the alpha-D-Man-(1-&gt;4)-alpha-D-GlcN-(1-&gt;6)-(1-radyl,2-acyl-sn-glycero-3-phospho)-2-acyl-inositol (also termed H2) intermediate to generate an alpha-D-Man-(1-&gt;6)-alpha-D-Man-(1-&gt;4)-alpha-D-GlcN-(1-&gt;6)-(1-radyl,2-acyl-sn-glycero-3-phospho)-2-acyl-inositol (also termed H3) and participates in the seventh step of the glycosylphosphatidylinositol-anchor biosynthesis. Also transfers the second mannose on a 2-PEtn-alpha-D-Man-(1-&gt;4)-alpha-D-GlcN-(1-&gt;6)-(1-radyl,2-acyl-sn-glycero-3-phospho)-2-acyl-inositol (also termed H5). In Homo sapiens (Human), this protein is GPI alpha-1,6-mannosyltransferase 2.